Here is a 427-residue protein sequence, read N- to C-terminus: Serine--tRNA ligase (427 aa).

231–233 (TAE) provides a ligand contact to L-serine. 262 to 264 (RSE) is a binding site for ATP. Glu285 is a binding site for L-serine. 349 to 352 (EISS) contributes to the ATP binding site. Ser385 provides a ligand contact to L-serine.

This sequence belongs to the class-II aminoacyl-tRNA synthetase family. Type-1 seryl-tRNA synthetase subfamily. In terms of assembly, homodimer. The tRNA molecule binds across the dimer.

It localises to the cytoplasm. It carries out the reaction tRNA(Ser) + L-serine + ATP = L-seryl-tRNA(Ser) + AMP + diphosphate + H(+). The catalysed reaction is tRNA(Sec) + L-serine + ATP = L-seryl-tRNA(Sec) + AMP + diphosphate + H(+). It participates in aminoacyl-tRNA biosynthesis; selenocysteinyl-tRNA(Sec) biosynthesis; L-seryl-tRNA(Sec) from L-serine and tRNA(Sec): step 1/1. Its function is as follows. Catalyzes the attachment of serine to tRNA(Ser). Is also able to aminoacylate tRNA(Sec) with serine, to form the misacylated tRNA L-seryl-tRNA(Sec), which will be further converted into selenocysteinyl-tRNA(Sec). This is Serine--tRNA ligase from Rhizobium rhizogenes (strain K84 / ATCC BAA-868) (Agrobacterium radiobacter).